The chain runs to 517 residues: Ribose import ATP-binding protein RbsA 1 (517 aa).

2 consecutive ABC transporter domains span residues 11–251 and 263–507; these read LEMR…VGRD and YDPG…ALAT. 43–50 provides a ligand contact to ATP; the sequence is GENGAGKS.

Belongs to the ABC transporter superfamily. Ribose importer (TC 3.A.1.2.1) family. In terms of assembly, the complex is composed of an ATP-binding protein (RbsA), two transmembrane proteins (RbsC) and a solute-binding protein (RbsB).

It is found in the cell inner membrane. It carries out the reaction D-ribose(out) + ATP + H2O = D-ribose(in) + ADP + phosphate + H(+). Part of the ABC transporter complex RbsABC involved in ribose import. Responsible for energy coupling to the transport system. The protein is Ribose import ATP-binding protein RbsA 1 of Burkholderia ambifaria (strain ATCC BAA-244 / DSM 16087 / CCUG 44356 / LMG 19182 / AMMD) (Burkholderia cepacia (strain AMMD)).